The sequence spans 406 residues: Vacuole membrane protein 1 (406 aa).

The disordered stretch occupies residues 1–22 (MAENGTDCEQRRVGMPKEQNNG). Residues 1 to 42 (MAENGTDCEQRRVGMPKEQNNGSFQDPSFMCNRKRRDREERQ) are Cytoplasmic-facing. Residues 43–63 (SIVLWRKPLITLQYFILEVLI) form a helical membrane-spanning segment. The Extracellular segment spans residues 64–76 (NLKEWSVRLWHRR). The chain crosses the membrane as a helical span at residues 77 to 97 (MMVVSVLLLLAVLSVAYYIEG). Residues 98–110 (EHQQCVQYIEKKC) lie on the Cytoplasmic side of the membrane. Residues 111-131 (LWCAYWVGLGILSSVGLGTGL) form a helical membrane-spanning segment. At 132 to 250 (HTFLLYLGPH…ATRAKLTVQN (119 aa)) the chain is on the extracellular side. The tract at residues 173–316 (GTEGAISLWT…FVIITFSKHI (144 aa)) is VTT domain. Residues 251–271 (LVQKVGFLGILACASIPNPLF) form a helical membrane-spanning segment. Topologically, residues 272–273 (DL) are cytoplasmic. A helical transmembrane segment spans residues 274 to 294 (AGITCGHFLVPFWTFFGATLI). The Extracellular portion of the chain corresponds to 295 to 306 (GKAIIKMHIQKL). A helical membrane pass occupies residues 307 to 327 (FVIITFSKHIVEQMVSLIGVI). The Cytoplasmic segment spans residues 328–363 (PSIGPSLQKPFQEYLEAQRKKLHHKGDSGTPQSENW). The chain crosses the membrane as a helical span at residues 364–384 (LSWAFEKLVIIMVFYFILSII). Residues 385–406 (NSMAQSYAKRVQQKKLSVEKTK) are Extracellular-facing.

Belongs to the VMP1 family.

Its subcellular location is the endoplasmic reticulum-Golgi intermediate compartment membrane. The protein resides in the cell membrane. The protein localises to the vacuole membrane. It localises to the endoplasmic reticulum membrane. The enzyme catalyses a 1,2-diacyl-sn-glycero-3-phospho-L-serine(in) = a 1,2-diacyl-sn-glycero-3-phospho-L-serine(out). It carries out the reaction cholesterol(in) = cholesterol(out). The catalysed reaction is a 1,2-diacyl-sn-glycero-3-phosphocholine(in) = a 1,2-diacyl-sn-glycero-3-phosphocholine(out). It catalyses the reaction a 1,2-diacyl-sn-glycero-3-phosphoethanolamine(in) = a 1,2-diacyl-sn-glycero-3-phosphoethanolamine(out). Its function is as follows. Phospholipid scramblase involved in lipid homeostasis and membrane dynamics processes. Has phospholipid scramblase activity toward cholesterol and phosphatidylserine, as well as phosphatidylethanolamine and phosphatidylcholine. Required for autophagosome formation: participates in early stages of autophagosome biogenesis at the endoplasmic reticulum (ER) membrane by reequilibrating the leaflets of the ER as lipids are extracted by atg2 (atg2a or atg2b) to mediate autophagosome assembly. In addition to autophagy, involved in other processes in which phospholipid scramblase activity is required. Modulates ER contacts with lipid droplets, mitochondria and endosomes. In Xenopus laevis (African clawed frog), this protein is Vacuole membrane protein 1.